Here is a 245-residue protein sequence, read N- to C-terminus: Tetraspanin-6 (245 aa).

Residues 1 to 19 (MASPSRRLQTKPVITCLKS) lie on the Cytoplasmic side of the membrane. The chain crosses the membrane as a helical span at residues 20–40 (VLLIYTFIFWITGVILLAVGI). Topologically, residues 41-59 (WGKVSLENYFSLLNEKATN) are extracellular. The helical transmembrane segment at 60 to 80 (VPFVLIGTGTVIILLGTFGCF) threads the bilayer. Residues 81-93 (ATCRTSAWMLKLY) lie on the Cytoplasmic side of the membrane. The helical transmembrane segment at 94 to 114 (AMFLTLIFLVELVAAIVGFVF) threads the bilayer. The Extracellular portion of the chain corresponds to 115-208 (RHEIKNSFKS…IKVMTTIESE (94 aa)). A glycan (N-linked (GlcNAc...) asparagine) is linked at Asn134. Residues 209-229 (MGVVAGISFGVACFQLIGIFL) form a helical membrane-spanning segment. At 230 to 245 (AYCLSRAITNNQYEIV) the chain is on the cytoplasmic side.

It belongs to the tetraspanin (TM4SF) family.

It localises to the membrane. This Mus musculus (Mouse) protein is Tetraspanin-6 (Tspan6).